The chain runs to 837 residues: Endo-1,4-beta-xylanase Z (837 aa).

Positions 1–28 (MSRKLFSVLLVGLMLMTSLLVTISSTSA) are cleaved as a signal peptide. The 122-residue stretch at 299 to 420 (TRIEAEDYDG…PVNIDWFTFG (122 aa)) folds into the CBM6 domain. One can recognise a Dockerin domain in the interval 424–492 (SSTGLGDLNG…ILRIITEFPG (69 aa)). Residues 512–833 (TISGNALRDY…KPAYNAIKEA (322 aa)) enclose the GH10 domain. Residue Glu-645 is the Proton donor of the active site. The active-site Nucleophile is Glu-754. Cys-783 and Cys-789 are disulfide-bonded.

This sequence belongs to the glycosyl hydrolase 10 (cellulase F) family.

The enzyme catalyses Endohydrolysis of (1-&gt;4)-beta-D-xylosidic linkages in xylans.. The chain is Endo-1,4-beta-xylanase Z (xynZ) from Acetivibrio thermocellus (strain ATCC 27405 / DSM 1237 / JCM 9322 / NBRC 103400 / NCIMB 10682 / NRRL B-4536 / VPI 7372) (Clostridium thermocellum).